The following is a 197-amino-acid chain: Xanthine phosphoribosyltransferase (197 aa).

Xanthine-binding residues include leucine 20 and threonine 27. Alanine 128–alanine 132 lines the 5-phospho-alpha-D-ribose 1-diphosphate pocket. Lysine 156 contributes to the xanthine binding site.

Belongs to the purine/pyrimidine phosphoribosyltransferase family. Xpt subfamily. As to quaternary structure, homodimer.

It localises to the cytoplasm. It carries out the reaction XMP + diphosphate = xanthine + 5-phospho-alpha-D-ribose 1-diphosphate. It participates in purine metabolism; XMP biosynthesis via salvage pathway; XMP from xanthine: step 1/1. Its function is as follows. Converts the preformed base xanthine, a product of nucleic acid breakdown, to xanthosine 5'-monophosphate (XMP), so it can be reused for RNA or DNA synthesis. The polypeptide is Xanthine phosphoribosyltransferase (Lactococcus lactis subsp. lactis (strain IL1403) (Streptococcus lactis)).